Consider the following 186-residue polypeptide: dCTP deaminase (186 aa).

106–111 (KSTYAR) contacts dCTP. The active-site Proton donor/acceptor is E132. Residues Q151, Y166, and Q176 each coordinate dCTP.

This sequence belongs to the dCTP deaminase family. As to quaternary structure, homotrimer.

It carries out the reaction dCTP + H2O + H(+) = dUTP + NH4(+). It functions in the pathway pyrimidine metabolism; dUMP biosynthesis; dUMP from dCTP (dUTP route): step 1/2. In terms of biological role, catalyzes the deamination of dCTP to dUTP. The sequence is that of dCTP deaminase from Nautilia profundicola (strain ATCC BAA-1463 / DSM 18972 / AmH).